The chain runs to 463 residues: 6-phosphofructo-2-kinase/fructose-2,6-bisphosphatase 3 (463 aa).

A 6-phosphofructo-2-kinase region spans residues 1 to 246 (MPLELTQSRV…VYYLMNIHWQ (246 aa)). ATP is bound at residue 42-50 (GLPARGKTY). 2 residues coordinate beta-D-fructose 6-phosphate: Arg75 and Arg99. Asp125 is a catalytic residue. 2 residues coordinate beta-D-fructose 6-phosphate: Thr127 and Arg133. Cys155 is an active-site residue. 164–169 (NIMEVK) provides a ligand contact to ATP. Residues Lys169, Arg191, and Tyr195 each coordinate beta-D-fructose 6-phosphate. The segment at 247–463 (PRTIYLCRHG…PNPLMRSNSH (217 aa)) is fructose-2,6-bisphosphatase. Beta-D-fructose 2,6-bisphosphate is bound at residue Arg254. The active-site Tele-phosphohistidine intermediate is His255. Residues Asn261 and Gly267 each contribute to the beta-D-fructose 2,6-bisphosphate site. Glu324 (proton donor/acceptor) is an active-site residue. Tyr335 lines the beta-D-fructose 2,6-bisphosphate pocket. 346-349 (YALA) is a binding site for ATP. The beta-D-fructose 2,6-bisphosphate site is built by Lys353, Tyr364, and Gln390. ATP-binding positions include 390-394 (QAVCV) and Tyr426. The interval 444–463 (RERSEDAKKGPNPLMRSNSH) is disordered. Ser462 carries the phosphoserine; by AMPK and PKA modification.

It in the C-terminal section; belongs to the phosphoglycerate mutase family. As to quaternary structure, homodimer. Forms a heterodimer with PFKFB2. In terms of processing, phosphorylation by AMPK stimulates activity. In terms of tissue distribution, brain.

The enzyme catalyses beta-D-fructose 2,6-bisphosphate + H2O = beta-D-fructose 6-phosphate + phosphate. It carries out the reaction beta-D-fructose 6-phosphate + ATP = beta-D-fructose 2,6-bisphosphate + ADP + H(+). Its function is as follows. Catalyzes both the synthesis and degradation of fructose 2,6-bisphosphate. The chain is 6-phosphofructo-2-kinase/fructose-2,6-bisphosphatase 3 (PFKFB3) from Bos taurus (Bovine).